The following is a 781-amino-acid chain: Ubiquitin carboxyl-terminal hydrolase 14 (781 aa).

A UBP-type zinc finger spans residues 169-279 (STCPHTENFQ…SALQIYGINI (111 aa)). Residues Cys-171, His-173, Cys-192, Cys-195, Cys-204, Cys-207, Cys-212, His-224, His-228, His-235, Cys-253, and Cys-256 each coordinate Zn(2+). One can recognise a USP domain in the interval 323-781 (CGLINLGNSC…NGYIYFYTRC (459 aa)). Cys-332 serves as the catalytic Nucleophile. 2 consecutive UBA domains span residues 576-626 (DEDE…LFQH) and 649-689 (EVDE…VFNN). The active-site Proton acceptor is His-737.

The protein belongs to the peptidase C19 family.

It localises to the cytoplasm. Its subcellular location is the nucleus. It carries out the reaction Thiol-dependent hydrolysis of ester, thioester, amide, peptide and isopeptide bonds formed by the C-terminal Gly of ubiquitin (a 76-residue protein attached to proteins as an intracellular targeting signal).. Functionally, required for the adaptation to the presence of glucose in the growth medium; mediates the degradation of enzymes involved in gluconeogenesis when cells are shifted to glucose-containing medium. Required for proteasome-dependent catabolite degradation of fructose-1,6-bisphosphatase (FBP1). Accelerates proteasomal breakdown of ubiquitinated proteins as it disassembles free ubiquitin chains that would compete with ubiquitinated proteins to bind to the proteasome. This chain is Ubiquitin carboxyl-terminal hydrolase 14 (UBP14), found in Saccharomyces cerevisiae (strain ATCC 204508 / S288c) (Baker's yeast).